Consider the following 250-residue polypeptide: Octanoyltransferase (250 aa).

Residues 44 to 224 (GAGSDRLLLL…AVVQALNGDL (181 aa)) enclose the BPL/LPL catalytic domain. Substrate-binding positions include 82–89 (RGGKITWH), 154–156 (AIG), and 167–169 (GIS). The active-site Acyl-thioester intermediate is the Cys185. The segment at 224–250 (LPVRDHDLPRPGTTPAAPNSTRVRSMT) is disordered. Residues 239-250 (AAPNSTRVRSMT) show a composition bias toward polar residues.

Belongs to the LipB family.

The protein resides in the cytoplasm. It carries out the reaction octanoyl-[ACP] + L-lysyl-[protein] = N(6)-octanoyl-L-lysyl-[protein] + holo-[ACP] + H(+). It participates in protein modification; protein lipoylation via endogenous pathway; protein N(6)-(lipoyl)lysine from octanoyl-[acyl-carrier-protein]: step 1/2. Functionally, catalyzes the transfer of endogenously produced octanoic acid from octanoyl-acyl-carrier-protein onto the lipoyl domains of lipoate-dependent enzymes. Lipoyl-ACP can also act as a substrate although octanoyl-ACP is likely to be the physiological substrate. This Nocardia farcinica (strain IFM 10152) protein is Octanoyltransferase.